The primary structure comprises 353 residues: T-complex protein 1 subunit eta (353 aa).

This sequence belongs to the TCP-1 chaperonin family. Heterooligomeric complex of about 850 to 900 kDa that forms two stacked rings, 12 to 16 nm in diameter.

The protein localises to the cytoplasm. Functionally, molecular chaperone; assists the folding of proteins upon ATP hydrolysis. Known to play a role, in vitro, in the folding of actin and tubulin. The chain is T-complex protein 1 subunit eta from Tetrahymena thermophila.